Here is a 352-residue protein sequence, read N- to C-terminus: Protein-glutamate methylesterase/protein-glutamine glutaminase (352 aa).

Residues 4 to 121 (RVLIVDDSAT…YDGIDEIQKE (118 aa)) form the Response regulatory domain. D55 carries the 4-aspartylphosphate modification. The 193-residue stretch at 159-351 (AQTTNKLIAI…VKIASLLSER (193 aa)) folds into the CheB-type methylesterase domain. Residues S171, H197, and D293 contribute to the active site.

The protein belongs to the CheB family. Post-translationally, phosphorylated by CheA. Phosphorylation of the N-terminal regulatory domain activates the methylesterase activity.

The protein localises to the cytoplasm. It catalyses the reaction [protein]-L-glutamate 5-O-methyl ester + H2O = L-glutamyl-[protein] + methanol + H(+). The catalysed reaction is L-glutaminyl-[protein] + H2O = L-glutamyl-[protein] + NH4(+). In terms of biological role, involved in chemotaxis. Part of a chemotaxis signal transduction system that modulates chemotaxis in response to various stimuli. Catalyzes the demethylation of specific methylglutamate residues introduced into the chemoreceptors (methyl-accepting chemotaxis proteins or MCP) by CheR. Also mediates the irreversible deamidation of specific glutamine residues to glutamic acid. In Sulfurimonas denitrificans (strain ATCC 33889 / DSM 1251) (Thiomicrospira denitrificans (strain ATCC 33889 / DSM 1251)), this protein is Protein-glutamate methylesterase/protein-glutamine glutaminase.